Here is a 470-residue protein sequence, read N- to C-terminus: Ubiquitin carboxyl-terminal hydrolase calypso (470 aa).

Positions Gly-43–Pro-274 constitute a UCH catalytic domain. Catalysis depends on Cys-129, which acts as the Nucleophile. His-211 acts as the Proton donor in catalysis. A disordered region spans residues Asp-305 to Leu-324. The region spanning Asn-373 to Pro-401 is the ULD domain. The positively charged C-terminal tail required for binding nucleosomes stretch occupies residues Lys-403–Lys-470. Residues Ala-422–Ser-451 show a composition bias toward low complexity. Positions Ala-422–Lys-470 are disordered. Over residues Pro-456–Lys-470 the composition is skewed to basic residues.

The protein belongs to the peptidase C12 family. BAP1 subfamily. Catalytic component of the polycomb repressive deubiquitinase (PR-DUB) complex, at least composed of caly/calypso, Asx and sba (MBD5/6 homolog). The PR-DUB complex associates with nucleosomes to mediate deubiquitination of histone H2AK118ub1 substrates; the association requires the positively charged C-terminal tail of caly, probably due to direct binding of DNA. Interacts (via ULD domain) with Asx (via DEUBAD domain); the interaction produces a stable heterodimer with a composite binding site for ubiquitin. Homodimerizes (via coiled-coil hinge-region between the UCH and ULD domains) to mediate assembly of 2 copies of the caly-Asx heterodimer into a bisymmetric tetramer; dimerization enhances PR-DUB association with nucleosomes.

The protein resides in the nucleus. The catalysed reaction is Thiol-dependent hydrolysis of ester, thioester, amide, peptide and isopeptide bonds formed by the C-terminal Gly of ubiquitin (a 76-residue protein attached to proteins as an intracellular targeting signal).. Its function is as follows. Catalytic component of the polycomb repressive deubiquitinase (PR-DUB) complex, a complex that specifically mediates deubiquitination of histone H2A monoubiquitinated at 'Lys-119' (H2AK118ub1). Mediates bisymmetric organization of the PR-DUB complex and is involved in association with nucleosomes to mediate deubiquitination. Does not deubiquitinate monoubiquitinated histone H2B. Required to maintain the transcriptionally repressive state of homeotic genes throughout development. The PR-DUB complex has weak or no activity toward 'Lys-48'- and 'Lys-63'-linked polyubiquitin chains. Polycomb group (PcG) protein. This chain is Ubiquitin carboxyl-terminal hydrolase calypso, found in Drosophila ananassae (Fruit fly).